Consider the following 102-residue polypeptide: Protein RnfH (102 aa).

This sequence belongs to the UPF0125 (RnfH) family.

This is Protein RnfH from Haemophilus influenzae (strain 86-028NP).